We begin with the raw amino-acid sequence, 146 residues long: Large ribosomal subunit protein uL15 (146 aa).

The span at 1-13 shows a compositional bias: basic and acidic residues; sequence MKLHELKPAEGSR. A disordered region spans residues 1–51; sequence MKLHELKPAEGSRKVRNRVGRGIGSGNGKTAGRGHKGQNARSGGGVRLGFE. Gly residues-rich tracts occupy residues 21–31 and 42–51; these read RGIGSGNGKTA and SGGGVRLGFE.

Belongs to the universal ribosomal protein uL15 family. Part of the 50S ribosomal subunit.

Binds to the 23S rRNA. This Bacillus mycoides (strain KBAB4) (Bacillus weihenstephanensis) protein is Large ribosomal subunit protein uL15.